The sequence spans 183 residues: ATP synthase subunit delta (183 aa).

The protein belongs to the ATPase delta chain family. F-type ATPases have 2 components, F(1) - the catalytic core - and F(0) - the membrane proton channel. F(1) has five subunits: alpha(3), beta(3), gamma(1), delta(1), epsilon(1). F(0) has three main subunits: a(1), b(2) and c(10-14). The alpha and beta chains form an alternating ring which encloses part of the gamma chain. F(1) is attached to F(0) by a central stalk formed by the gamma and epsilon chains, while a peripheral stalk is formed by the delta and b chains.

It is found in the cell membrane. F(1)F(0) ATP synthase produces ATP from ADP in the presence of a proton or sodium gradient. F-type ATPases consist of two structural domains, F(1) containing the extramembraneous catalytic core and F(0) containing the membrane proton channel, linked together by a central stalk and a peripheral stalk. During catalysis, ATP synthesis in the catalytic domain of F(1) is coupled via a rotary mechanism of the central stalk subunits to proton translocation. Its function is as follows. This protein is part of the stalk that links CF(0) to CF(1). It either transmits conformational changes from CF(0) to CF(1) or is implicated in proton conduction. The sequence is that of ATP synthase subunit delta from Halalkalibacterium halodurans (strain ATCC BAA-125 / DSM 18197 / FERM 7344 / JCM 9153 / C-125) (Bacillus halodurans).